Here is a 93-residue protein sequence, read N- to C-terminus: Large ribosomal subunit protein uL23cz/uL23cy (93 aa).

Belongs to the universal ribosomal protein uL23 family. Part of the 50S ribosomal subunit.

The protein resides in the plastid. The protein localises to the chloroplast. Functionally, binds to 23S rRNA. The polypeptide is Large ribosomal subunit protein uL23cz/uL23cy (rpl23-A) (Phaseolus angularis (Azuki bean)).